A 285-amino-acid chain; its full sequence is Tryptophan synthase alpha chain (285 aa).

Residues Glu-53 and Asp-64 each act as proton acceptor in the active site.

Belongs to the TrpA family. In terms of assembly, tetramer of two alpha and two beta chains.

It carries out the reaction (1S,2R)-1-C-(indol-3-yl)glycerol 3-phosphate + L-serine = D-glyceraldehyde 3-phosphate + L-tryptophan + H2O. It participates in amino-acid biosynthesis; L-tryptophan biosynthesis; L-tryptophan from chorismate: step 5/5. In terms of biological role, the alpha subunit is responsible for the aldol cleavage of indoleglycerol phosphate to indole and glyceraldehyde 3-phosphate. The sequence is that of Tryptophan synthase alpha chain from Bordetella pertussis (strain Tohama I / ATCC BAA-589 / NCTC 13251).